A 413-amino-acid polypeptide reads, in one-letter code: Probable alpha-amylase 2 (413 aa).

Residues 74–75 and 191–196 contribute to the substrate site; these read YL and RFDFAR. Catalysis depends on Asp-193, which acts as the Nucleophile. Glu-218 (proton donor) is an active-site residue. Residues Trp-220, Ser-222, Gln-239, Asp-246, Lys-280, 286-288, His-299, Gln-305, Lys-386, and Trp-411 contribute to the substrate site; that span reads GWW.

It belongs to the glycosyl hydrolase 13 family. It depends on Ca(2+) as a cofactor. As to expression, expressed in developing siliques.

It localises to the cytoplasm. The protein resides in the cytosol. The enzyme catalyses Endohydrolysis of (1-&gt;4)-alpha-D-glucosidic linkages in polysaccharides containing three or more (1-&gt;4)-alpha-linked D-glucose units.. Probable alpha-amylase that does not seem to be required for breakdown of transitory starch in leaves. The chain is Probable alpha-amylase 2 (AMY2) from Arabidopsis thaliana (Mouse-ear cress).